The following is a 162-amino-acid chain: Phosphopantetheine adenylyltransferase (162 aa).

Ser9 provides a ligand contact to substrate. Residues 9-10 (SF) and His17 each bind ATP. Substrate contacts are provided by Lys41, Leu73, and Lys87. Residues 88 to 90 (GLR), Glu98, and 123 to 129 (YAHLSSS) each bind ATP.

Belongs to the bacterial CoaD family. In terms of assembly, homohexamer. It depends on Mg(2+) as a cofactor.

The protein localises to the cytoplasm. It carries out the reaction (R)-4'-phosphopantetheine + ATP + H(+) = 3'-dephospho-CoA + diphosphate. Its pathway is cofactor biosynthesis; coenzyme A biosynthesis; CoA from (R)-pantothenate: step 4/5. Its function is as follows. Reversibly transfers an adenylyl group from ATP to 4'-phosphopantetheine, yielding dephospho-CoA (dPCoA) and pyrophosphate. This is Phosphopantetheine adenylyltransferase from Symbiobacterium thermophilum (strain DSM 24528 / JCM 14929 / IAM 14863 / T).